Consider the following 914-residue polypeptide: MRTLGAMAIMLVVMGTVIFLSFILRSRDILCGKTMKSHVISAVETSQLMVDHAVYNTMKRNLKKREVLSPAQLLSFFKLPESTSGAISRAAEIMETSIQVMKREQSQFSTDALSADILGTIANLSGCLPFMLPPRCPDTCLANKYRPITGACNNRDHPRWGASNTALARWLPPVYEDGFSQPKGWNPNFLYHGFPLPPVREVTRHLIQVSNEAVTEDDQYSDFLPVWGQYIDHDIALTPQSTSTAAFWGGVDCQLTCENQNPCFPIQLPSNSSGTTACLPFYRSSAACGTGDQGALFGNLSAANPRQQMNGLTSFLDASTVYGSSPGVEKQLRNWSSSAGLLRVNTLHLDAGRAYLPFATAACAPEPGTPRTNRTPCFLAGDGRASEVPALAAVHTLWLREHNRLASAFKAINKHWSANTAYQEARKVVGALHQIITMRDYIPKILGPDAFRQYVGPYEGYNPTVNPTVSNIFSTAAFRFGHATVHPLVRRLNTDFQEHTELPRLQLRDVFFRPWRLIQEGGLDPIVRGLLARAAKLQVQGQLMNEELTERLFVLSNVGTLDLASLNLQRGRDHGLPDYNEWREFCGLSRLETPAELNKAIANRSMVNKIMDLYKHADNIDVWLGGLAEKFLPGARTGPLFACIIGKQMKALRDGDRFWWENTNVFTDAQRQELEKHSLPRVICDNTGLTRVPVDAFRIGKFPQDFESCEDIPSMDLELWRETFPQDDKCVFPEEVDNGNFVHCEESGKLVLVYSCFHGYKLQGQEQVTCTQKGWDSEPPVCKDVNECADLTHPPCHPSAQCKNTKGSFQCVCTDPYVLGEDEKTCIDSGRLPRASWVSIALGALLIGGLASLTWIVICRWTHADKKATLPITERVTTQSGCRKSQGRGISPHKAAAQDTGQEPASGSRVLLCE.

The first 31 residues, 1-31, serve as a signal peptide directing secretion; it reads MRTLGAMAIMLVVMGTVIFLSFILRSRDILC. At 32–834 the chain is on the extracellular side; sequence GKTMKSHVIS…TCIDSGRLPR (803 aa). N-linked (GlcNAc...) asparagine glycosylation is present at Asn123. Cys136 and Cys152 are disulfide-bonded. Heme b is bound at residue Asp232. The Proton acceptor role is filled by His233. Position 234 (Asp234) interacts with Ca(2+). Cystine bridges form between Cys253/Cys263 and Cys257/Cys278. N-linked (GlcNAc...) asparagine glycans are attached at residues Asn271 and Asn299. Positions 313, 315, 317, and 319 each coordinate Ca(2+). Asn334 carries an N-linked (GlcNAc...) asparagine glycan. Heme b-binding residues include Glu387 and His482. Disulfide bonds link Cys586-Cys643, Cys684-Cys709, Cys730-Cys770, Cys756-Cys782, Cys788-Cys802, Cys796-Cys811, and Cys813-Cys826. Asn603 is a glycosylation site (N-linked (GlcNAc...) asparagine). One can recognise a Sushi domain in the interval 728-783; that stretch reads DKCVFPEEVDNGNFVHCEESGKLVLVYSCFHGYKLQGQEQVTCTQKGWDSEPPVCK. The region spanning 784–827 is the EGF-like; calcium-binding domain; that stretch reads DVNECADLTHPPCHPSAQCKNTKGSFQCVCTDPYVLGEDEKTCI. The helical transmembrane segment at 835-859 threads the bilayer; it reads ASWVSIALGALLIGGLASLTWIVIC. Topologically, residues 860–914 are cytoplasmic; it reads RWTHADKKATLPITERVTTQSGCRKSQGRGISPHKAAAQDTGQEPASGSRVLLCE. The tract at residues 881-909 is disordered; the sequence is GCRKSQGRGISPHKAAAQDTGQEPASGSR.

It belongs to the peroxidase family. XPO subfamily. As to quaternary structure, interacts with DUOX1, DUOX2 and CYBA. Requires Ca(2+) as cofactor. The cofactor is heme b. Heme is covalently bound through a H(2)O(2)-dependent autocatalytic process. Heme insertion is important for the delivery of protein at the cell surface. Post-translationally, cleaved in its N-terminal part.

It is found in the membrane. The enzyme catalyses 2 iodide + H2O2 + 2 H(+) = diiodine + 2 H2O. It carries out the reaction [thyroglobulin]-L-tyrosine + iodide + H2O2 + H(+) = [thyroglobulin]-3-iodo-L-tyrosine + 2 H2O. The catalysed reaction is [thyroglobulin]-3-iodo-L-tyrosine + iodide + H2O2 + H(+) = [thyroglobulin]-3,5-diiodo-L-tyrosine + 2 H2O. It catalyses the reaction 2 [thyroglobulin]-3,5-diiodo-L-tyrosine + H2O2 = [thyroglobulin]-L-thyroxine + [thyroglobulin]-dehydroalanine + 2 H2O. The enzyme catalyses [thyroglobulin]-3-iodo-L-tyrosine + [thyroglobulin]-3,5-diiodo-L-tyrosine + H2O2 = [thyroglobulin]-3,3',5-triiodo-L-thyronine + [thyroglobulin]-dehydroalanine + 2 H2O. It participates in hormone biosynthesis; thyroid hormone biosynthesis. Functionally, iodination and coupling of the hormonogenic tyrosines in thyroglobulin to yield the thyroid hormones T(3) and T(4). This is Thyroid peroxidase (Tpo) from Mus musculus (Mouse).